We begin with the raw amino-acid sequence, 297 residues long: uncharacterized protein (297 aa).

This is an uncharacterized protein from Frog virus 3 (isolate Goorha) (FV-3).